We begin with the raw amino-acid sequence, 147 residues long: Hemoglobin subunit beta-1 (147 aa).

Positions 3-147 (KWSKTELTII…VVSALGKQYH (145 aa)) constitute a Globin domain. Heme b contacts are provided by His64 and His93.

The protein belongs to the globin family. In terms of assembly, hb1 is a heterotetramer of two alpha chains and two beta-1 chains. As to expression, red blood cells.

Its function is as follows. Involved in oxygen transport from gills to the various peripheral tissues. The protein is Hemoglobin subunit beta-1 (hbb1) of Cygnodraco mawsoni (Antarctic dragonfish).